We begin with the raw amino-acid sequence, 68 residues long: Large ribosomal subunit protein uL29 (68 aa).

This sequence belongs to the universal ribosomal protein uL29 family.

This is Large ribosomal subunit protein uL29 from Nitrobacter winogradskyi (strain ATCC 25391 / DSM 10237 / CIP 104748 / NCIMB 11846 / Nb-255).